The primary structure comprises 271 residues: Aminoglycoside 3'-phosphotransferase (271 aa).

D198 functions as the Proton acceptor in the catalytic mechanism.

It belongs to the aminoglycoside phosphotransferase family.

It catalyses the reaction kanamycin A + ATP = kanamycin 3'-phosphate + ADP + H(+). Resistance to kanamycin and structurally-related aminoglycosides, including amikacin. The chain is Aminoglycoside 3'-phosphotransferase (aphA) from Escherichia coli.